The primary structure comprises 305 residues: Taste receptor type 2 member 13 (305 aa).

The Extracellular portion of the chain corresponds to 1 to 7 (MGSNVYG). A helical transmembrane segment spans residues 8–28 (ILTMVMIAEFVFGNMSNGFIV). Topologically, residues 29–43 (LINCIDWVRKGTLSS) are cytoplasmic. A helical transmembrane segment spans residues 44 to 64 (IGWILLFLAISRMVLIWEMLI). Over 65 to 88 (TWIKYMKYSFSFVTGTELRGIMFT) the chain is Extracellular. A helical transmembrane segment spans residues 89-109 (WVISNHFSLWLATILSIFYLL). The Cytoplasmic segment spans residues 110–128 (KIASFSKPVFLYLKWREKK). A helical membrane pass occupies residues 129–149 (VLLIVLLGNLIFLMLNILQIN). The Extracellular segment spans residues 150-182 (KHIEHWMYQYERNITWSSRVSDFAGFSNLVLLE). N-linked (GlcNAc...) asparagine glycosylation is present at N162. The chain crosses the membrane as a helical span at residues 183 to 203 (MIVFSVTPFTVALVSFILLIF). Over 204–232 (SLWKHLQKMHLNSRGERDPSTKAHVNALR) the chain is Cytoplasmic. The helical transmembrane segment at 233–253 (IMVSFLLLYATYFISFFLSLI) threads the bilayer. At 254–262 (PMAHKTRLG) the chain is on the extracellular side. The helical transmembrane segment at 263–283 (LMFSITVGLFYPSSHSFILIL) threads the bilayer. The Cytoplasmic portion of the chain corresponds to 284–305 (GHSNLRQASLWVMTYLKCGQKH).

This sequence belongs to the G-protein coupled receptor T2R family.

The protein resides in the cell membrane. In terms of biological role, receptor that may play a role in the perception of bitterness and is gustducin-linked. May play a role in sensing the chemical composition of the gastrointestinal content. The activity of this receptor may stimulate alpha gustducin, mediate PLC-beta-2 activation and lead to the gating of TRPM5. The chain is Taste receptor type 2 member 13 from Mus musculus (Mouse).